A 419-amino-acid chain; its full sequence is Probable glycosidase C21B10.07 (419 aa).

2 disordered regions span residues 1–20 (MGIP…AALS) and 29–67 (DPAR…NNEN). The segment covering 30–59 (PARKNESTNDVIDNHTDTEIDDHDNDHENL) has biased composition (basic and acidic residues). A helical membrane pass occupies residues 88–108 (FIWILIFIVALICSVLIGVLG). The GH16 domain occupies 122–387 (PSYKAKTYSL…WAGSSVYSSA (266 aa)). Catalysis depends on glutamate 237, which acts as the Nucleophile. Glutamate 242 functions as the Proton donor in the catalytic mechanism.

It belongs to the glycosyl hydrolase 16 family.

Its subcellular location is the membrane. The protein is Probable glycosidase C21B10.07 of Schizosaccharomyces pombe (strain 972 / ATCC 24843) (Fission yeast).